The sequence spans 266 residues: MRILITNDDGVHSPGLRLLYEFASPLGAVDVVAPESPKSATGLGITLHKPLRMYETDLCGFKAVATSGTPSDTIYLAAYGLGRRYDLVLSGINLGDNTSLQVILSSGTLGAAFQAALLGIPAVAYSLHAQDWEEVLKNREALEIMKAVVQKSAEFVLKYGLPHGVDVVSINFPRNMKRGVKAKLVRAAKFRFAQKVDRRVDPRGSSYYWLYGTDLAPEPDTDVYTVLVEGQIAVTPLTLDLNALNTDRKLDAEALAKLVRYINEAI.

A divalent metal cation is bound by residues Asp-8, Asp-9, Ser-39, and Asn-93.

It belongs to the SurE nucleotidase family. A divalent metal cation serves as cofactor.

The protein resides in the cytoplasm. The enzyme catalyses a ribonucleoside 5'-phosphate + H2O = a ribonucleoside + phosphate. Functionally, nucleotidase that shows phosphatase activity on nucleoside 5'-monophosphates. This is 5'-nucleotidase SurE from Pyrobaculum arsenaticum (strain DSM 13514 / JCM 11321 / PZ6).